An 83-amino-acid polypeptide reads, in one-letter code: RNA-binding protein Hfq (83 aa).

In terms of domain architecture, Sm spans 9–68 (DPYLNILRKERIPVSIFLVNGIKLQGQIESFDQFVILLRNTVSQMVYKHAISTVVPSRNV).

This sequence belongs to the Hfq family. Homohexamer.

Its function is as follows. RNA chaperone that binds small regulatory RNA (sRNAs) and mRNAs to facilitate mRNA translational regulation in response to envelope stress, environmental stress and changes in metabolite concentrations. Also binds with high specificity to tRNAs. The sequence is that of RNA-binding protein Hfq from Chromohalobacter salexigens (strain ATCC BAA-138 / DSM 3043 / CIP 106854 / NCIMB 13768 / 1H11).